Here is a 187-residue protein sequence, read N- to C-terminus: BCL2/adenovirus E1B 19 kDa protein-interacting protein 3 (187 aa).

Residues 42–86 (LDAQHESGRSSSKSSHCDSPPRSQTPQDTNRAEIDSHSFGEKNST) form a disordered region. A phosphoserine mark is found at Ser48, Ser60, Ser77, Ser79, Ser85, and Ser88. Low complexity predominate over residues 50-63 (RSSSKSSHCDSPPR). Positions 71 to 81 (NRAEIDSHSFG) are enriched in basic and acidic residues. The BH3 signature appears at 93–118 (IERRREVESILKKNSDWIWDWSSRPE). A helical transmembrane segment spans residues 157–177 (VFLPSLLLSHLLAIGLGIYIG).

It belongs to the NIP3 family. As to quaternary structure, homodimer. Binds to BCL2. Interacts with BNIP3L and ACAA2. Interacts (via BH3 domain) with SPATA18 (via coiled-coil domains). Interacts with BOK; promotes BOK oligomerization. Interacts with PPTC7; this interaction promotes BNIP3 degradation.

The protein resides in the mitochondrion. The protein localises to the mitochondrion outer membrane. Apoptosis-inducing protein that can overcome BCL2 suppression. May play a role in repartitioning calcium between the two major intracellular calcium stores in association with BCL2. Involved in mitochondrial quality control via its interaction with SPATA18/MIEAP: in response to mitochondrial damage, participates in mitochondrial protein catabolic process (also named MALM) leading to the degradation of damaged proteins inside mitochondria. The physical interaction of SPATA18/MIEAP, BNIP3 and BNIP3L/NIX at the mitochondrial outer membrane may play a critical role in the translocation of lysosomal proteins from the cytoplasm to the mitochondrial matrix. The physical interaction of SPATA18/MIEAP, BNIP3 and BNIP3L/NIX at the mitochondrial outer membrane regulates the opening of a pore in the mitochondrial double membrane in order to mediate the translocation of lysosomal proteins from the cytoplasm to the mitochondrial matrix. Plays an important role in the calprotectin (S100A8/A9)-induced cell death pathway. In Mus musculus (Mouse), this protein is BCL2/adenovirus E1B 19 kDa protein-interacting protein 3.